A 396-amino-acid chain; its full sequence is Elongation factor Tu 2 (396 aa).

The tr-type G domain occupies lysine 10–aspartate 206. The interval glycine 19–threonine 26 is G1. Glycine 19–threonine 26 contacts GTP. Threonine 26 is a binding site for Mg(2+). Residues glycine 60 to asparagine 64 form a G2 region. A G3 region spans residues aspartate 81–glycine 84. GTP is bound by residues aspartate 81–histidine 85 and asparagine 136–aspartate 139. Residues asparagine 136–aspartate 139 form a G4 region. The segment at serine 174–lysine 176 is G5.

It belongs to the TRAFAC class translation factor GTPase superfamily. Classic translation factor GTPase family. EF-Tu/EF-1A subfamily. In terms of assembly, monomer.

Its subcellular location is the cytoplasm. The catalysed reaction is GTP + H2O = GDP + phosphate + H(+). Its function is as follows. GTP hydrolase that promotes the GTP-dependent binding of aminoacyl-tRNA to the A-site of ribosomes during protein biosynthesis. The protein is Elongation factor Tu 2 of Caulobacter sp. (strain K31).